A 68-amino-acid polypeptide reads, in one-letter code: MKNYEIAAMDKKELLSKIKELENRLADLNFYQAIEPAQNPMVFRNLKRDIARMKTRLTQIDRQEKSNA.

Belongs to the universal ribosomal protein uL29 family.

The sequence is that of Large ribosomal subunit protein uL29 from Chlorobaculum tepidum (strain ATCC 49652 / DSM 12025 / NBRC 103806 / TLS) (Chlorobium tepidum).